The chain runs to 264 residues: ATP synthase subunit b 1 (264 aa).

A helical membrane pass occupies residues 2-22 (LFDWFTFWAQLLNFLILVWLL). The interval 240-264 (ASSALLDGPDDEMNEEEGHAGKDAD) is disordered. Residues 255–264 (EEGHAGKDAD) show a composition bias toward basic and acidic residues.

The protein belongs to the ATPase B chain family. In terms of assembly, F-type ATPases have 2 components, F(1) - the catalytic core - and F(0) - the membrane proton channel. F(1) has five subunits: alpha(3), beta(3), gamma(1), delta(1), epsilon(1). F(0) has four main subunits: a(1), b(2) and c(10-14). The alpha and beta chains form an alternating ring which encloses part of the gamma chain. F(1) is attached to F(0) by a central stalk formed by the gamma and epsilon chains, while a peripheral stalk is formed by the delta and b chains.

The protein localises to the cell inner membrane. Functionally, f(1)F(0) ATP synthase produces ATP from ADP in the presence of a proton or sodium gradient. F-type ATPases consist of two structural domains, F(1) containing the extramembraneous catalytic core and F(0) containing the membrane proton channel, linked together by a central stalk and a peripheral stalk. During catalysis, ATP synthesis in the catalytic domain of F(1) is coupled via a rotary mechanism of the central stalk subunits to proton translocation. Component of the F(0) channel, it forms part of the peripheral stalk, linking F(1) to F(0). This chain is ATP synthase subunit b 1, found in Chlorobium luteolum (strain DSM 273 / BCRC 81028 / 2530) (Pelodictyon luteolum).